The chain runs to 322 residues: Secreted effector protein SseI (322 aa).

Interacts with host IQGAP1 and host TRIP6 (thyroid receptor-interacting protein 6).

It is found in the secreted. The protein localises to the host cytoplasm. Effector proteins function to alter host cell physiology and promote bacterial survival in host tissues. This protein is required to maintain a long-term chronic systemic infection in mice. It inhibits normal cell migration of primary macrophages and dendritic cells, by a mechanism that involves interaction with the host factor IQGAP1, an important regulator of the cytoskeleton and cell migration. Also accelerates the systemic spread of infection from the gastrointestinal tract to the bloodstream, probably by interacting with host TRIP6. This is Secreted effector protein SseI (sseI) from Salmonella typhimurium (strain LT2 / SGSC1412 / ATCC 700720).